The sequence spans 108 residues: Ribonuclease P protein component 4 (108 aa).

Zn(2+) is bound by residues cysteine 67, cysteine 70, cysteine 93, and cysteine 96.

It belongs to the eukaryotic/archaeal RNase P protein component 4 family. In terms of assembly, consists of a catalytic RNA component and at least 4-5 protein subunits. Requires Zn(2+) as cofactor.

The protein resides in the cytoplasm. The catalysed reaction is Endonucleolytic cleavage of RNA, removing 5'-extranucleotides from tRNA precursor.. Part of ribonuclease P, a protein complex that generates mature tRNA molecules by cleaving their 5'-ends. The protein is Ribonuclease P protein component 4 of Methanococcoides burtonii (strain DSM 6242 / NBRC 107633 / OCM 468 / ACE-M).